The chain runs to 215 residues: Cytochrome b6 (215 aa).

The chain crosses the membrane as a helical span at residues 32–52 (IFYCLGGITLTCFLVQVATGF). Residue cysteine 35 coordinates heme c. 2 residues coordinate heme b: histidine 86 and histidine 100. Helical transmembrane passes span 90–110 (ASMMVLMMILHVFRVYLTGGF), 116–136 (LTWVTGVVLGVLTASFGVTGY), and 186–206 (LHTFVLPLLTAVFMLMHFLMI). 2 residues coordinate heme b: histidine 187 and histidine 202.

It belongs to the cytochrome b family. PetB subfamily. As to quaternary structure, the 4 large subunits of the cytochrome b6-f complex are cytochrome b6, subunit IV (17 kDa polypeptide, PetD), cytochrome f and the Rieske protein, while the 4 small subunits are PetG, PetL, PetM and PetN. The complex functions as a dimer. Heme b is required as a cofactor. The cofactor is heme c.

The protein resides in the plastid. It localises to the chloroplast thylakoid membrane. Functionally, component of the cytochrome b6-f complex, which mediates electron transfer between photosystem II (PSII) and photosystem I (PSI), cyclic electron flow around PSI, and state transitions. The protein is Cytochrome b6 of Arabidopsis thaliana (Mouse-ear cress).